We begin with the raw amino-acid sequence, 106 residues long: ATP-dependent Clp protease adapter protein ClpS (106 aa).

Basic and acidic residues predominate over residues methionine 1–aspartate 10. The segment at methionine 1 to alanine 23 is disordered.

It belongs to the ClpS family. In terms of assembly, binds to the N-terminal domain of the chaperone ClpA.

Involved in the modulation of the specificity of the ClpAP-mediated ATP-dependent protein degradation. This is ATP-dependent Clp protease adapter protein ClpS from Xylella fastidiosa (strain M23).